The chain runs to 368 residues: Isocitrate dehydrogenase [NAD] subunit 2, mitochondrial (368 aa).

The N-terminal 14 residues, 1-14, are a transit peptide targeting the mitochondrion; the sequence is MFRQSIVKQSCRFL. Residues arginine 118, arginine 128, arginine 149, and aspartate 236 each contribute to the substrate site. Mg(2+) contacts are provided by aspartate 236, aspartate 262, and aspartate 266.

This sequence belongs to the isocitrate and isopropylmalate dehydrogenases family. In terms of assembly, octamer of two non-identical subunits IDH1 and IDH2. The cofactor is Mg(2+). Mn(2+) is required as a cofactor.

The protein localises to the mitochondrion. It catalyses the reaction D-threo-isocitrate + NAD(+) = 2-oxoglutarate + CO2 + NADH. Performs an essential role in the oxidative function of the citric acid cycle. The chain is Isocitrate dehydrogenase [NAD] subunit 2, mitochondrial (IDH2) from Kluyveromyces lactis (strain ATCC 8585 / CBS 2359 / DSM 70799 / NBRC 1267 / NRRL Y-1140 / WM37) (Yeast).